We begin with the raw amino-acid sequence, 257 residues long: Snake venom serine protease 3 (257 aa).

A signal peptide spans 1 to 18 (MVLIRVLANLLILQLSYA). Residues 19 to 24 (QKSSEL) constitute a propeptide that is removed on maturation. In terms of domain architecture, Peptidase S1 spans 25–248 (VIGGDECNIN…YTDWIQNIIA (224 aa)). 6 disulfide bridges follow: C31-C163, C50-C66, C98-C255, C142-C209, C174-C188, and C199-C224. N-linked (GlcNAc...) asparagine glycosylation is present at N44. H65 (charge relay system) is an active-site residue. N103 carries N-linked (GlcNAc...) asparagine glycosylation. D110 (charge relay system) is an active-site residue. 2 N-linked (GlcNAc...) asparagine glycosylation sites follow: N117 and N154. Residue S203 is the Charge relay system of the active site. N250 carries N-linked (GlcNAc...) asparagine glycosylation.

The protein belongs to the peptidase S1 family. Snake venom subfamily. Monomer. Expressed by the venom gland.

The protein localises to the secreted. In terms of biological role, snake venom serine protease that may act in the hemostasis system of the prey. The protein is Snake venom serine protease 3 (TLF3) of Protobothrops flavoviridis (Habu).